Here is a 971-residue protein sequence, read N- to C-terminus: Unconventional myosin-XIX (971 aa).

Residues 1 to 25 (MSRPLSKNTEREPKQINGHQNNLSN) are disordered. The Myosin motor domain maps to 48–755 (HLYDDLTKVN…MVELLEERRL (708 aa)). Position 145–152 (145–152 (GESGAGKT)) interacts with ATP. The segment at 611–633 (LESLMQILHSTTPHYIRCIKPNV) is actin-binding. IQ domains lie at 758-787 (ISSKAMCIQCCWRSYRQRKLAKQSKAATTI) and 780-809 (QSKAATTIQAAVKGWLTKKYIKRMHSAATV). Positions 826 to 971 (AAELDDSTED…FNEILLEKTV (146 aa)) are myMOMA region.

It belongs to the TRAFAC class myosin-kinesin ATPase superfamily. Myosin family. In terms of assembly, myosin is a hexamer of 2 heavy chains and 4 light chains.

It is found in the mitochondrion outer membrane. The protein localises to the cytoplasm. It localises to the cytoskeleton. Functionally, actin-based motor molecule with ATPase activity that localizes to the mitochondrion outer membrane. Motor protein that moves towards the plus-end of actin filaments. Required for mitochondrial inheritance during mitosis. May be involved in mitochondrial transport or positioning. The sequence is that of Unconventional myosin-XIX from Xenopus laevis (African clawed frog).